The chain runs to 447 residues: Phosphoglucosamine mutase (447 aa).

Ser-103 functions as the Phosphoserine intermediate in the catalytic mechanism. Mg(2+) is bound by residues Ser-103, Asp-242, Asp-244, and Asp-246. Position 103 is a phosphoserine (Ser-103).

It belongs to the phosphohexose mutase family. Requires Mg(2+) as cofactor. In terms of processing, activated by phosphorylation.

It catalyses the reaction alpha-D-glucosamine 1-phosphate = D-glucosamine 6-phosphate. Catalyzes the conversion of glucosamine-6-phosphate to glucosamine-1-phosphate. This is Phosphoglucosamine mutase from Dinoroseobacter shibae (strain DSM 16493 / NCIMB 14021 / DFL 12).